Here is a 245-residue protein sequence, read N- to C-terminus: Protein crossbronx (245 aa).

The UBC core domain occupies 20–177 (HQEYKILAEY…VQESIAESKA (158 aa)).

This sequence belongs to the ubiquitin-conjugating enzyme family. FTS subfamily.

This is Protein crossbronx (cbx) from Drosophila mojavensis (Fruit fly).